The following is a 366-amino-acid chain: Putative [LysW]-aminoadipate semialdehyde/glutamate semialdehyde transaminase (366 aa).

Pyridoxal 5'-phosphate contacts are provided by residues 90-91 (GT) and Phe-117. Arg-120 serves as a coordination point for substrate. Pyridoxal 5'-phosphate is bound at residue 202–205 (DEVQ). At Lys-230 the chain carries N6-(pyridoxal phosphate)lysine. Ser-254 contributes to the substrate binding site. Thr-255 contacts pyridoxal 5'-phosphate.

It belongs to the class-III pyridoxal-phosphate-dependent aminotransferase family. LysJ subfamily. In terms of assembly, homodimer. Requires pyridoxal 5'-phosphate as cofactor.

The protein resides in the cytoplasm. It carries out the reaction [amino-group carrier protein]-C-terminal-gamma-(L-lysyl)-L-glutamate + 2-oxoglutarate = [amino-group carrier protein]-C-terminal-N-(1-carboxy-5-oxopentan-1-yl)-L-glutamine + L-glutamate. The enzyme catalyses [amino-group carrier protein]-C-terminal-gamma-(L-ornithyl)-L-glutamate + 2-oxoglutarate = [amino-group carrier protein]-C-terminal-gamma-(L-glutamyl-5-semialdehyde)-L-glutamate + L-glutamate. It participates in amino-acid biosynthesis; L-lysine biosynthesis via AAA pathway; L-lysine from L-alpha-aminoadipate (Thermus route): step 4/5. Its pathway is amino-acid biosynthesis; L-arginine biosynthesis. Its function is as follows. Involved in both the arginine and lysine biosynthetic pathways. The sequence is that of Putative [LysW]-aminoadipate semialdehyde/glutamate semialdehyde transaminase from Pyrococcus furiosus (strain ATCC 43587 / DSM 3638 / JCM 8422 / Vc1).